A 169-amino-acid polypeptide reads, in one-letter code: Crossover junction endodeoxyribonuclease RuvC (169 aa).

Residues D7, E67, and D140 contribute to the active site. Positions 7, 67, and 140 each coordinate Mg(2+).

The protein belongs to the RuvC family. Homodimer which binds Holliday junction (HJ) DNA. The HJ becomes 2-fold symmetrical on binding to RuvC with unstacked arms; it has a different conformation from HJ DNA in complex with RuvA. In the full resolvosome a probable DNA-RuvA(4)-RuvB(12)-RuvC(2) complex forms which resolves the HJ. Requires Mg(2+) as cofactor.

It is found in the cytoplasm. The catalysed reaction is Endonucleolytic cleavage at a junction such as a reciprocal single-stranded crossover between two homologous DNA duplexes (Holliday junction).. The RuvA-RuvB-RuvC complex processes Holliday junction (HJ) DNA during genetic recombination and DNA repair. Endonuclease that resolves HJ intermediates. Cleaves cruciform DNA by making single-stranded nicks across the HJ at symmetrical positions within the homologous arms, yielding a 5'-phosphate and a 3'-hydroxyl group; requires a central core of homology in the junction. The consensus cleavage sequence is 5'-(A/T)TT(C/G)-3'. Cleavage occurs on the 3'-side of the TT dinucleotide at the point of strand exchange. HJ branch migration catalyzed by RuvA-RuvB allows RuvC to scan DNA until it finds its consensus sequence, where it cleaves and resolves the cruciform DNA. The chain is Crossover junction endodeoxyribonuclease RuvC from Clostridioides difficile (strain 630) (Peptoclostridium difficile).